We begin with the raw amino-acid sequence, 267 residues long: Stomatin-3 (267 aa).

A helical transmembrane segment spans residues 17–37 (FVALICAWAFLLLTFPVSIFF).

Belongs to the band 7/mec-2 family.

Its subcellular location is the membrane. This Caenorhabditis elegans protein is Stomatin-3 (sto-3).